Here is a 337-residue protein sequence, read N- to C-terminus: Porphobilinogen deaminase (337 aa).

Position 254 is an S-(dipyrrolylmethanemethyl)cysteine (Cys-254).

This sequence belongs to the HMBS family. Dipyrromethane is required as a cofactor.

The catalysed reaction is 4 porphobilinogen + H2O = hydroxymethylbilane + 4 NH4(+). It participates in porphyrin-containing compound metabolism; protoporphyrin-IX biosynthesis; coproporphyrinogen-III from 5-aminolevulinate: step 2/4. In terms of biological role, tetrapolymerization of the monopyrrole PBG into the hydroxymethylbilane pre-uroporphyrinogen in several discrete steps. This is Porphobilinogen deaminase (pda-1) from Neurospora crassa (strain ATCC 24698 / 74-OR23-1A / CBS 708.71 / DSM 1257 / FGSC 987).